Here is a 382-residue protein sequence, read N- to C-terminus: Apolipoprotein A-IV (382 aa).

The signal sequence occupies residues methionine 1–alanine 20. 13 repeat units span residues aspartate 33–leucine 54, alanine 60–valine 81, proline 82–arginine 103, proline 115–glycine 136, proline 137–threonine 158, alanine 159–threonine 180, proline 181–threonine 202, proline 203–alanine 224, proline 225–lysine 246, lysine 247–valine 268, proline 269–glutamine 286, lysine 287–glycine 308, and proline 309–glycine 330. The interval aspartate 33–glycine 330 is 13 X 22 AA approximate tandem repeats.

This sequence belongs to the apolipoprotein A1/A4/E family. As to quaternary structure, homodimer. Post-translationally, phosphorylation sites are present in the extracellular medium.

The protein resides in the secreted. Functionally, may have a role in chylomicrons and VLDL secretion and catabolism. Required for efficient activation of lipoprotein lipase by ApoC-II; potent activator of LCAT. Apoa-IV is a major component of HDL and chylomicrons. The chain is Apolipoprotein A-IV (APOA4) from Neomonachus schauinslandi (Hawaiian monk seal).